We begin with the raw amino-acid sequence, 183 residues long: Inosine/xanthosine triphosphatase (183 aa).

Mg(2+) is bound at residue Asp75. Residue Asp75–Gly76 coordinates substrate.

It belongs to the YjjX NTPase family. In terms of assembly, homodimer. The cofactor is Mg(2+). Mn(2+) is required as a cofactor.

The catalysed reaction is XTP + H2O = XDP + phosphate + H(+). It carries out the reaction ITP + H2O = IDP + phosphate + H(+). Its function is as follows. Phosphatase that hydrolyzes non-canonical purine nucleotides such as XTP and ITP to their respective diphosphate derivatives. Probably excludes non-canonical purines from DNA/RNA precursor pool, thus preventing their incorporation into DNA/RNA and avoiding chromosomal lesions. In Vibrio vulnificus (strain CMCP6), this protein is Inosine/xanthosine triphosphatase.